A 496-amino-acid polypeptide reads, in one-letter code: Adenosylhomocysteinase (496 aa).

Residues Thr-68, Asp-157, and Glu-219 each contribute to the substrate site. Thr-220–Thr-222 lines the NAD(+) pocket. 2 residues coordinate substrate: Lys-249 and Asp-253. Residues Asn-254, Gly-283–Gly-288, Glu-306, Asn-341, Ile-362–His-364, and Asn-410 each bind NAD(+).

It belongs to the adenosylhomocysteinase family. NAD(+) is required as a cofactor.

It localises to the cytoplasm. It carries out the reaction S-adenosyl-L-homocysteine + H2O = L-homocysteine + adenosine. Its pathway is amino-acid biosynthesis; L-homocysteine biosynthesis; L-homocysteine from S-adenosyl-L-homocysteine: step 1/1. May play a key role in the regulation of the intracellular concentration of adenosylhomocysteine. The chain is Adenosylhomocysteinase from Mycolicibacterium paratuberculosis (strain ATCC BAA-968 / K-10) (Mycobacterium paratuberculosis).